Reading from the N-terminus, the 2475-residue chain is Non-reducing polyketide synthase ausA (2475 aa).

An N-terminal acylcarrier protein transacylase domain (SAT) region spans residues 14–253 (VLFGSKYSEI…HHADHLSAAQ (240 aa)). In terms of domain architecture, Ketosynthase family 3 (KS3) spans 384-800 (SIPIAVTGLA…GSNAAIVLKE (417 aa)). Catalysis depends on for beta-ketoacyl synthase activity residues Cys549, His684, and His723. A malonyl-CoA:ACP transacylase (MAT) domain region spans residues 910 to 1212 (LCFGGQTGNK…CPMDLSGPQA (303 aa)). Ser997 (for acyl/malonyl transferase activity) is an active-site residue. The segment at 1279-1407 (EDLKLVQLLK…GTISLSPGAD (129 aa)) is N-terminal hotdog fold. The PKS/mFAS DH domain maps to 1279 to 1586 (EDLKLVQLLK…FTSVSIQSLR (308 aa)). The product template (PT) domain stretch occupies residues 1282 to 1585 (KLVQLLKNEG…TFTSVSIQSL (304 aa)). The active-site Proton acceptor; for dehydratase activity is His1312. Residues 1435–1586 (SSSGLKRSTV…FTSVSIQSLR (152 aa)) are C-terminal hotdog fold. Asp1493 acts as the Proton donor; for dehydratase activity in catalysis. Residues 1626-1703 (SSNGDDLRTV…ALVQRIFPGR (78 aa)) form the Carrier domain. Position 1663 is an O-(pantetheine 4'-phosphoryl)serine (Ser1663). The methyltransferase (CMeT) domain stretch occupies residues 1865-2098 (QHTSEHKLLH…GFNWVDWTDN (234 aa)). The thioesterase (TE) domain stretch occupies residues 2127-2475 (SAIHEETVVY…YEFLRSHVGL (349 aa)). Catalysis depends on for thioesterase activity residues Ser2250, Asp2412, and His2444.

The catalysed reaction is 3 malonyl-CoA + acetyl-CoA + 2 S-adenosyl-L-methionine = 3,5-dimethylorsellinate + 2 S-adenosyl-L-homocysteine + 3 CO2 + 4 CoA. It functions in the pathway secondary metabolite biosynthesis; terpenoid biosynthesis. In terms of biological role, non-reducing polyketide synthase; part of the gene cluster A that mediates the biosynthesis of the fungal meroterpenoid acetoxydehydroaustin. The first step of the pathway is the synthesis of 3,5-dimethylorsellinic acid by the polyketide synthase ausA. 3,5-dimethylorsellinic acid is then prenylated by the polyprenyl transferase ausN. Further epoxidation by the FAD-dependent monooxygenase ausM and cyclization by the probable terpene cyclase ausL lead to the formation of protoaustinoid A. Protoaustinoid A is then oxidized to spiro-lactone preaustinoid A3 by the combined action of the FAD-binding monooxygenases ausB and ausC, and the dioxygenase ausE. Acid-catalyzed keto-rearrangement and ring contraction of the tetraketide portion of preaustinoid A3 by ausJ lead to the formation of preaustinoid A4. The aldo-keto reductase ausK, with the help of ausH, is involved in the next step by transforming preaustinoid A4 into isoaustinone which is in turn hydroxylated by the P450 monooxygenase ausI to form austinolide. The cytochrome P450 monooxygenase ausG then modifies austinolide to austinol. Austinol is further acetylated to austin by the O-acetyltransferase ausP, which spontaneously changes to dehydroaustin. The cytochrome P450 monooxygenase then converts dehydroaustin is into 7-dehydrodehydroaustin. The hydroxylation catalyzed by ausR permits the second O-acetyltransferase ausQ to add an additional acetyl group to the molecule, leading to the formation of acetoxydehydroaustin. Due to genetic rearrangements of the clusters and the subsequent loss of some enzymes, the end product of the Penicillium brasilianum austinoid biosynthesis clusters is acetoxydehydroaustin. The protein is Non-reducing polyketide synthase ausA of Penicillium brasilianum.